Reading from the N-terminus, the 72-residue chain is ATP synthase subunit c (72 aa).

The next 2 helical transmembrane spans lie at L5 to A25 and A51 to V71.

Belongs to the ATPase C chain family. F-type ATPases have 2 components, F(1) - the catalytic core - and F(0) - the membrane proton channel. F(1) has five subunits: alpha(3), beta(3), gamma(1), delta(1), epsilon(1). F(0) has three main subunits: a(1), b(2) and c(10-14). The alpha and beta chains form an alternating ring which encloses part of the gamma chain. F(1) is attached to F(0) by a central stalk formed by the gamma and epsilon chains, while a peripheral stalk is formed by the delta and b chains.

The protein resides in the cell membrane. Its function is as follows. F(1)F(0) ATP synthase produces ATP from ADP in the presence of a proton or sodium gradient. F-type ATPases consist of two structural domains, F(1) containing the extramembraneous catalytic core and F(0) containing the membrane proton channel, linked together by a central stalk and a peripheral stalk. During catalysis, ATP synthesis in the catalytic domain of F(1) is coupled via a rotary mechanism of the central stalk subunits to proton translocation. Key component of the F(0) channel; it plays a direct role in translocation across the membrane. A homomeric c-ring of between 10-14 subunits forms the central stalk rotor element with the F(1) delta and epsilon subunits. The sequence is that of ATP synthase subunit c from Clostridium perfringens (strain ATCC 13124 / DSM 756 / JCM 1290 / NCIMB 6125 / NCTC 8237 / Type A).